Here is a 45-residue protein sequence, read N- to C-terminus: Photosystem II reaction center protein K (45 aa).

Residues Met-1–Ala-8 constitute a propeptide that is removed on maturation. A helical transmembrane segment spans residues Ile-16–Ala-40.

Belongs to the PsbK family. In terms of assembly, PSII is composed of 1 copy each of membrane proteins PsbA, PsbB, PsbC, PsbD, PsbE, PsbF, PsbH, PsbI, PsbJ, PsbK, PsbL, PsbM, PsbT, PsbX, PsbY, PsbZ, Psb30/Ycf12, peripheral proteins PsbO, CyanoQ (PsbQ), PsbU, PsbV and a large number of cofactors. It forms dimeric complexes.

It is found in the cellular thylakoid membrane. Its function is as follows. One of the components of the core complex of photosystem II (PSII). PSII is a light-driven water:plastoquinone oxidoreductase that uses light energy to abstract electrons from H(2)O, generating O(2) and a proton gradient subsequently used for ATP formation. It consists of a core antenna complex that captures photons, and an electron transfer chain that converts photonic excitation into a charge separation. This is Photosystem II reaction center protein K from Synechocystis sp. (strain ATCC 27184 / PCC 6803 / Kazusa).